The sequence spans 312 residues: Apolipoprotein E (312 aa).

Positions 1-18 (MKALWALLLVPLLTGCLA) are cleaved as a signal peptide. Tandem repeats lie at residues 72–93 (VLME…EQLG), 94–115 (PVAE…ARLG), 116–137 (ADME…TMLG), 138–159 (QSTE…KRLM), 160–181 (RDAD…EGAE), 182–203 (RGVS…QRTA), 204–225 (NLGS…DRIR), and 226–247 (GRLE…DQME). Residues 72–247 (VLMEDTMTEV…RLEEVRDQME (176 aa)) form an 8 X 22 AA approximate tandem repeats region. Met135 bears the Methionine sulfoxide mark. Residue Ser139 is modified to Phosphoserine. An LDL and other lipoprotein receptors binding region spans residues 150–160 (HLRKMRKRLMR). The segment at 150 to 160 (HLRKMRKRLMR) is LDL receptor binding. 154–157 (MRKR) serves as a coordination point for heparin. The tract at residues 202 to 282 (TANLGSGAAQ…GWFEPLVEDM (81 aa)) is lipid-binding and lipoprotein association. 221-228 (SDRIRGRL) contacts heparin. The tract at residues 258-312 (QQIRLQAEVFQARLKGWFEPLVEDMQRQWANLMEKIQASVATNSIASTTVPLENQ) is homooligomerization. Residues 270-282 (RLKGWFEPLVEDM) are specificity for association with VLDL.

Belongs to the apolipoprotein A1/A4/E family. As to quaternary structure, homotetramer. May interact with ABCA1; functionally associated with ABCA1 in the biogenesis of HDLs. May interact with APP/A4 amyloid-beta peptide; the interaction is extremely stable in vitro but its physiological significance is unclear. May interact with MAPT. May interact with MAP2. In the cerebrospinal fluid, interacts with secreted SORL1. Interacts with PMEL; this allows the loading of PMEL luminal fragment on ILVs to induce fibril nucleation. Post-translationally, APOE exists as multiple glycosylated and sialylated glycoforms within cells and in plasma. The extent of glycosylation and sialylation are tissue and context specific. In terms of processing, glycated in plasma VLDL. Phosphorylated by FAM20C in the extracellular medium.

It localises to the secreted. The protein resides in the extracellular space. It is found in the extracellular matrix. Its subcellular location is the extracellular vesicle. The protein localises to the endosome. It localises to the multivesicular body. In terms of biological role, APOE is an apolipoprotein, a protein associating with lipid particles, that mainly functions in lipoprotein-mediated lipid transport between organs via the plasma and interstitial fluids. APOE is a core component of plasma lipoproteins and is involved in their production, conversion and clearance. Apolipoproteins are amphipathic molecules that interact both with lipids of the lipoprotein particle core and the aqueous environment of the plasma. As such, APOE associates with chylomicrons, chylomicron remnants, very low density lipoproteins (VLDL) and intermediate density lipoproteins (IDL) but shows a preferential binding to high-density lipoproteins (HDL). It also binds a wide range of cellular receptors including the LDL receptor/LDLR, the LDL receptor-related proteins LRP1, LRP2 and LRP8 and the very low-density lipoprotein receptor/VLDLR that mediate the cellular uptake of the APOE-containing lipoprotein particles. Finally, APOE also has a heparin-binding activity and binds heparan-sulfate proteoglycans on the surface of cells, a property that supports the capture and the receptor-mediated uptake of APOE-containing lipoproteins by cells. A main function of APOE is to mediate lipoprotein clearance through the uptake of chylomicrons, VLDLs, and HDLs by hepatocytes. APOE is also involved in the biosynthesis by the liver of VLDLs as well as their uptake by peripheral tissues ensuring the delivery of triglycerides and energy storage in muscle, heart and adipose tissues. By participating in the lipoprotein-mediated distribution of lipids among tissues, APOE plays a critical role in plasma and tissues lipid homeostasis. APOE is also involved in two steps of reverse cholesterol transport, the HDLs-mediated transport of cholesterol from peripheral tissues to the liver, and thereby plays an important role in cholesterol homeostasis. First, it is functionally associated with ABCA1 in the biogenesis of HDLs in tissues. Second, it is enriched in circulating HDLs and mediates their uptake by hepatocytes. APOE also plays an important role in lipid transport in the central nervous system, regulating neuron survival and sprouting. This chain is Apolipoprotein E (Apoe), found in Rattus rattus (Black rat).